The following is a 373-amino-acid chain: Chaperone protein DnaJ (373 aa).

One can recognise a J domain in the interval 4 to 69 (SYYEILEITQ…EKRAIYDRYG (66 aa)). Residues 135-212 (GCKKNIDFTY…CKGLGYNESK (78 aa)) form a CR-type zinc finger. Zn(2+)-binding residues include C148, C151, C164, C167, C186, C189, C200, and C203. 4 CXXCXGXG motif repeats span residues 148–155 (CKTCNGTG), 164–171 (CPKCQGRG), 186–193 (CPDCQGIG), and 200–207 (CSDCKGLG).

The protein belongs to the DnaJ family. Homodimer. Zn(2+) is required as a cofactor.

Its subcellular location is the cytoplasm. Its function is as follows. Participates actively in the response to hyperosmotic and heat shock by preventing the aggregation of stress-denatured proteins and by disaggregating proteins, also in an autonomous, DnaK-independent fashion. Unfolded proteins bind initially to DnaJ; upon interaction with the DnaJ-bound protein, DnaK hydrolyzes its bound ATP, resulting in the formation of a stable complex. GrpE releases ADP from DnaK; ATP binding to DnaK triggers the release of the substrate protein, thus completing the reaction cycle. Several rounds of ATP-dependent interactions between DnaJ, DnaK and GrpE are required for fully efficient folding. Also involved, together with DnaK and GrpE, in the DNA replication of plasmids through activation of initiation proteins. The protein is Chaperone protein DnaJ of Campylobacter jejuni (strain RM1221).